Reading from the N-terminus, the 1095-residue chain is Formin-like protein 2 (1095 aa).

A GBD/FH3 domain is found at leucine 23–glutamate 469. Positions leucine 381–glutamine 478 form a coiled coil. Residues proline 521–serine 602 are disordered. 3 stretches are compositionally biased toward pro residues: residues glycine 524–proline 534, alanine 548–glycine 576, and proline 583–proline 599. The FH2 domain maps to isoleucine 617 to alanine 1008.

Belongs to the formin homology family. Interacts with TCP11L2; this interaction promotes muscle-derived satellite cell (MDSC) migration and differentiation.

It localises to the cytoplasm. Plays a role in the regulation of cell morphology and cytoskeletal organization. Required in the cortical actin filament dynamics. In Bos taurus (Bovine), this protein is Formin-like protein 2.